A 37-amino-acid polypeptide reads, in one-letter code: Rugosin-C (37 aa).

An intrachain disulfide couples Cys31 to Cys37.

This sequence belongs to the frog skin active peptide (FSAP) family. Brevinin subfamily. As to expression, expressed by the skin glands.

The protein localises to the secreted. Has antibacterial activity against Gram-positive bacteria. The protein is Rugosin-C of Glandirana rugosa (Japanese wrinkled frog).